The chain runs to 259 residues: Putative aldolase class 2 protein PA3430 (259 aa).

Zn(2+) contacts are provided by histidine 113, histidine 115, and histidine 176.

This sequence belongs to the aldolase class II family. It depends on Zn(2+) as a cofactor.

This Pseudomonas aeruginosa (strain ATCC 15692 / DSM 22644 / CIP 104116 / JCM 14847 / LMG 12228 / 1C / PRS 101 / PAO1) protein is Putative aldolase class 2 protein PA3430.